Reading from the N-terminus, the 693-residue chain is Polyribonucleotide nucleotidyltransferase (693 aa).

Residues D486 and D492 each coordinate Mg(2+). Residues 553–612 (PRFTTLKIHPDKIRDVIGKGGATIRALTEETGTSIDISDDGTVKIASVDKAAGDEARRRI) form the KH domain. An S1 motif domain is found at 622-690 (GRIYEGRVVK…KQGRIRLSMK (69 aa)).

Belongs to the polyribonucleotide nucleotidyltransferase family. Component of the RNA degradosome, which is a multiprotein complex involved in RNA processing and mRNA degradation. It depends on Mg(2+) as a cofactor.

It is found in the cytoplasm. It carries out the reaction RNA(n+1) + phosphate = RNA(n) + a ribonucleoside 5'-diphosphate. Its function is as follows. Involved in mRNA degradation. Catalyzes the phosphorolysis of single-stranded polyribonucleotides processively in the 3'- to 5'-direction. The polypeptide is Polyribonucleotide nucleotidyltransferase (Thioalkalivibrio sulfidiphilus (strain HL-EbGR7)).